The sequence spans 273 residues: Vacuolar iron transporter (273 aa).

Residues 1-47 (MVSKKTIEARKAYYNEDVVLSKEAHDFYHNLDKHGENHNLDKDNLKT) lie on the Cytoplasmic side of the membrane. The helical transmembrane segment at 48-68 (IIFGSLDGIITIFAIVSGCVG) threads the bilayer. Residues 69–75 (AKITPTQ) lie on the Vacuolar side of the membrane. The helical transmembrane segment at 76-96 (VIIIGIGNLFANAISMGFSEY) threads the bilayer. Topologically, residues 97–181 (TSSTAQRDFM…NEDKNECLKK (85 aa)) are cytoplasmic. Fe cation is bound by residues Glu113, Glu116, Glu124, Glu127, Met161, and Glu165. Residues 182-202 (GIIMFLSFAVFGIIPLSAYVA) traverse the membrane as a helical segment. The Vacuolar segment spans residues 203-212 (YTVFFGYTDY). Residues 213–233 (TTSFLVVFISTLTTLFILGLF) form a helical membrane-spanning segment. Over 234–246 (KSQFTNQKPITCA) the chain is Cytoplasmic. The chain crosses the membrane as a helical span at residues 247–267 (LYMVLNGMIAGMVPFLLGVVL). The Vacuolar portion of the chain corresponds to 268 to 273 (KNNISE).

Belongs to the CCC1 family. Monomer.

Its subcellular location is the vacuole membrane. The protein resides in the endoplasmic reticulum membrane. It localises to the cytoplasmic vesicle membrane. The enzyme catalyses Fe(2+)(in) = Fe(2+)(out). Its function is as follows. Vacuolar iron transporter involved in the transfer of iron ions from the cytosol to the vacuole for intracellular iron storage. Involved in detoxification of excess iron. The transport mechanism is not well defined and the role of protons is not clear. The chain is Vacuolar iron transporter from Plasmodium falciparum (isolate 3D7).